Here is a 370-residue protein sequence, read N- to C-terminus: MTRGLAPLLPIEFHKMGSFRRPRPRFMSSPLLSELPRFQAARQALQLSSNSAWNSVQTAVINVFKGGGLQSNELYALNESIRRLLKSELGSFITDYFQNQLLAKGLSFVEEKIKQCEGDNRIEVLAEVWDHFFTETLPTLQAIFYPVQGQELTIRQISLLGFRDLVLLKVKLGDLLLLSQSKLPSSVIQMLLILQSVHEPTGPSEGYLQLEELVKQVVSPFLGLSGDRSCSRPTHSLARRHSRVRPKVTVLNYASLMTTVGRPLNEMVLTPLTEQEGEAYLEKCGSVRRHTVANAHSDIQLLAMATMMHSGLGEESGSEDKHLLLPPTFPPPHRQCSSEPSILDSPDEMELEDVASGSQEDSELNCASLS.

S28 bears the Phosphoserine mark. Residues 327 to 370 (PTFPPPHRQCSSEPSILDSPDEMELEDVASGSQEDSELNCASLS) form a disordered region.

The protein belongs to the PROTOR family. As to quaternary structure, interacts with the mammalian target of rapamycin complex 2 (mTORC2) which contains MTOR, MLST8, PRR5, RICTOR, MAPKAP1 and DEPTOR. Interacts with RFFL. Interacts (via C-terminus) with ZFP36 (via C-terminus); this interaction may accelerate ZFP36-mediated mRNA decay during stress. Interacts with RICTOR. Post-translationally, ubiquitinated. Ubiquitination by RFFL promotes proteasomal degradation of PRR5L thereby modifying the substrate-specific activity of the mTORC2 complex. Ubiquitination by RFFL is stimulated by LPA/lysophosphatidic acid.

Associates with the mTORC2 complex that regulates cellular processes including survival and organization of the cytoskeleton. Regulates the activity of the mTORC2 complex in a substrate-specific manner preventing for instance the specific phosphorylation of PKCs and thereby controlling cell migration. Plays a role in the stimulation of ZFP36-mediated mRNA decay of several ZFP36-associated mRNAs, such as TNF-alpha and GM-CSF, in response to stress. Required for ZFP36 localization to cytoplasmic stress granule (SG) and P-body (PB) in response to stress. This Rattus norvegicus (Rat) protein is Proline-rich protein 5-like (Prr5l).